The primary structure comprises 898 residues: Filament-like plant protein 7 (898 aa).

Coiled-coil stretches lie at residues 23–224 and 287–320; these read EVVA…TAEA and EKIN…LQFS. Disordered stretches follow at residues 429 to 482, 693 to 723, and 777 to 835; these read DNRP…DIKS, PGNQ…KLEE, and KSNN…GGNS. A compositionally biased stretch (low complexity) spans 434–459; it reads SSPICSSDSISATGPVENESNENSSE. The span at 460-469 shows a compositional bias: polar residues; the sequence is ATKTSGTVYS. Residues 703-764 are a coiled coil; it reads VEEEANDKTA…KALTNSKETA (62 aa). The span at 808 to 822 shows a compositional bias: basic and acidic residues; the sequence is MKAEDHNTGESKDQK.

It belongs to the FPP family. As to quaternary structure, interacts with WPP/MAF proteins.

The protein is Filament-like plant protein 7 (FPP7) of Arabidopsis thaliana (Mouse-ear cress).